A 98-amino-acid polypeptide reads, in one-letter code: Integration host factor subunit alpha (98 aa).

This sequence belongs to the bacterial histone-like protein family. Heterodimer of an alpha and a beta chain.

Its function is as follows. This protein is one of the two subunits of integration host factor, a specific DNA-binding protein that functions in genetic recombination as well as in transcriptional and translational control. The polypeptide is Integration host factor subunit alpha (Acinetobacter baumannii (strain AB307-0294)).